The following is a 232-amino-acid chain: Ribose-5-phosphate isomerase A (232 aa).

Residues 28 to 31 (TGST), 83 to 86 (DGAD), and 96 to 99 (KGGG) each bind substrate. E105 acts as the Proton acceptor in catalysis. K123 serves as a coordination point for substrate.

Belongs to the ribose 5-phosphate isomerase family. As to quaternary structure, homodimer.

It catalyses the reaction aldehydo-D-ribose 5-phosphate = D-ribulose 5-phosphate. It participates in carbohydrate degradation; pentose phosphate pathway; D-ribose 5-phosphate from D-ribulose 5-phosphate (non-oxidative stage): step 1/1. Functionally, catalyzes the reversible conversion of ribose-5-phosphate to ribulose 5-phosphate. The polypeptide is Ribose-5-phosphate isomerase A (Rhodopseudomonas palustris (strain HaA2)).